The sequence spans 172 residues: 5'(3')-deoxyribonucleotidase (172 aa).

Asp8 serves as the catalytic Nucleophile. Mg(2+) contacts are provided by Asp8, Asp10, and Asp132. The active-site Proton donor is the Asp10.

The protein belongs to the 5'(3')-deoxyribonucleotidase family. Requires Mg(2+) as cofactor.

Functionally, dephosphorylates nucleoside monophosphates such as the 5' and 2'(3')-phosphates of deoxyribonucleotides in vitro. Also catalyzes the dephosphorylation of coenzyme A (CoA), pyridoxal-5'-phosphate (PLP), riboflavine-5-phosphate (FMN) and nicotinamide adenine dinucleotide phosphate (NADP) in vitro. The sequence is that of 5'(3')-deoxyribonucleotidase (yorS) from Bacillus subtilis (strain 168).